A 475-amino-acid polypeptide reads, in one-letter code: Membrane-bound lytic murein transglycosylase F (475 aa).

The signal sequence occupies residues Met-1–Gly-30. Positions Lys-31–Gly-269 are non-LT domain. Residues Asp-270–Val-475 form an LT domain region. Residue Glu-314 is part of the active site.

The protein in the N-terminal section; belongs to the bacterial solute-binding protein 3 family. In the C-terminal section; belongs to the transglycosylase Slt family.

The protein localises to the cell outer membrane. The catalysed reaction is Exolytic cleavage of the (1-&gt;4)-beta-glycosidic linkage between N-acetylmuramic acid (MurNAc) and N-acetylglucosamine (GlcNAc) residues in peptidoglycan, from either the reducing or the non-reducing ends of the peptidoglycan chains, with concomitant formation of a 1,6-anhydrobond in the MurNAc residue.. In terms of biological role, murein-degrading enzyme that degrades murein glycan strands and insoluble, high-molecular weight murein sacculi, with the concomitant formation of a 1,6-anhydromuramoyl product. Lytic transglycosylases (LTs) play an integral role in the metabolism of the peptidoglycan (PG) sacculus. Their lytic action creates space within the PG sacculus to allow for its expansion as well as for the insertion of various structures such as secretion systems and flagella. This is Membrane-bound lytic murein transglycosylase F from Salmonella typhi.